The chain runs to 269 residues: Ubiquinone/menaquinone biosynthesis C-methyltransferase UbiE (269 aa).

Residues threonine 92, aspartate 113, and 141–142 (NA) each bind S-adenosyl-L-methionine.

Belongs to the class I-like SAM-binding methyltransferase superfamily. MenG/UbiE family.

It catalyses the reaction a 2-demethylmenaquinol + S-adenosyl-L-methionine = a menaquinol + S-adenosyl-L-homocysteine + H(+). The enzyme catalyses a 2-methoxy-6-(all-trans-polyprenyl)benzene-1,4-diol + S-adenosyl-L-methionine = a 5-methoxy-2-methyl-3-(all-trans-polyprenyl)benzene-1,4-diol + S-adenosyl-L-homocysteine + H(+). Its pathway is quinol/quinone metabolism; menaquinone biosynthesis; menaquinol from 1,4-dihydroxy-2-naphthoate: step 2/2. It functions in the pathway cofactor biosynthesis; ubiquinone biosynthesis. Functionally, methyltransferase required for the conversion of demethylmenaquinol (DMKH2) to menaquinol (MKH2) and the conversion of 2-polyprenyl-6-methoxy-1,4-benzoquinol (DDMQH2) to 2-polyprenyl-3-methyl-6-methoxy-1,4-benzoquinol (DMQH2). The polypeptide is Ubiquinone/menaquinone biosynthesis C-methyltransferase UbiE (Brucella canis (strain ATCC 23365 / NCTC 10854 / RM-666)).